The following is a 283-amino-acid chain: Thymidylate synthase (283 aa).

DUMP is bound at residue arginine 22. Cysteine 160 (nucleophile) is an active-site residue. Residues 180-183 (RSCD), asparagine 191, and 221-223 (HIY) each bind dUMP. Aspartate 183 contacts (6R)-5,10-methylene-5,6,7,8-tetrahydrofolate. Alanine 282 is a binding site for (6R)-5,10-methylene-5,6,7,8-tetrahydrofolate.

The protein belongs to the thymidylate synthase family. Bacterial-type ThyA subfamily. As to quaternary structure, homodimer.

The protein resides in the cytoplasm. The enzyme catalyses dUMP + (6R)-5,10-methylene-5,6,7,8-tetrahydrofolate = 7,8-dihydrofolate + dTMP. Its pathway is pyrimidine metabolism; dTTP biosynthesis. Catalyzes the reductive methylation of 2'-deoxyuridine-5'-monophosphate (dUMP) to 2'-deoxythymidine-5'-monophosphate (dTMP) while utilizing 5,10-methylenetetrahydrofolate (mTHF) as the methyl donor and reductant in the reaction, yielding dihydrofolate (DHF) as a by-product. This enzymatic reaction provides an intracellular de novo source of dTMP, an essential precursor for DNA biosynthesis. The chain is Thymidylate synthase from Idiomarina loihiensis (strain ATCC BAA-735 / DSM 15497 / L2-TR).